Consider the following 67-residue polypeptide: V-type proton ATPase subunit e (67 aa).

Over 1–2 (MG) the chain is Lumenal. A helical membrane pass occupies residues 3–23 (GLVVLLVGLLTALMSVVSYYV). Topologically, residues 24 to 35 (SPKGNNTSTWQM) are cytoplasmic. The helical transmembrane segment at 36-56 (SLILTFSCCYLLWAITYLAQL) threads the bilayer. Residues 57 to 67 (HPLEAPSRVLE) are Lumenal-facing.

It belongs to the V-ATPase e1/e2 subunit family. V-ATPase is a heteromultimeric enzyme composed of a peripheral catalytic V1 complex (components A to H) attached to an integral membrane V0 proton pore complex (components: a, c, c', c'', d, e, f and VOA1).

It localises to the vacuole membrane. Its function is as follows. Subunit of the V0 complex of vacuolar(H+)-ATPase (V-ATPase), a multisubunit enzyme composed of a peripheral complex (V1) that hydrolyzes ATP and a membrane integral complex (V0) that translocates protons. V-ATPase is responsible for acidifying and maintaining the pH of intracellular compartments. The protein is V-type proton ATPase subunit e (vma9) of Schizosaccharomyces pombe (strain 972 / ATCC 24843) (Fission yeast).